A 275-amino-acid chain; its full sequence is Diaminopimelate epimerase (275 aa).

3 residues coordinate substrate: N12, Q45, and N65. Residue C74 is the Proton donor of the active site. Substrate contacts are provided by residues 75 to 76, N158, N191, and 209 to 210; these read GN and ER. C218 functions as the Proton acceptor in the catalytic mechanism. 219-220 contributes to the substrate binding site; it reads GT.

The protein belongs to the diaminopimelate epimerase family. In terms of assembly, homodimer.

It is found in the cytoplasm. It catalyses the reaction (2S,6S)-2,6-diaminopimelate = meso-2,6-diaminopimelate. Its pathway is amino-acid biosynthesis; L-lysine biosynthesis via DAP pathway; DL-2,6-diaminopimelate from LL-2,6-diaminopimelate: step 1/1. Its function is as follows. Catalyzes the stereoinversion of LL-2,6-diaminopimelate (L,L-DAP) to meso-diaminopimelate (meso-DAP), a precursor of L-lysine and an essential component of the bacterial peptidoglycan. The protein is Diaminopimelate epimerase of Shewanella putrefaciens (strain CN-32 / ATCC BAA-453).